A 229-amino-acid chain; its full sequence is Cytidylate kinase (229 aa).

An ATP-binding site is contributed by Gly-12–Ser-20.

The protein belongs to the cytidylate kinase family. Type 1 subfamily.

It is found in the cytoplasm. It catalyses the reaction CMP + ATP = CDP + ADP. It carries out the reaction dCMP + ATP = dCDP + ADP. This Rhodococcus opacus (strain B4) protein is Cytidylate kinase.